The chain runs to 186 residues: ADP-ribosylation factor-like protein 6 (186 aa).

Glycine 2 carries N-myristoyl glycine lipidation. Residues 24–31 (GLDNSGKT), threonine 50, 69–73 (DMSGQ), glycine 72, 130–133 (NKMD), and alanine 164 each bind GTP. Mg(2+) contacts are provided by threonine 31 and threonine 50.

This sequence belongs to the small GTPase superfamily. Arf family. In terms of assembly, interacts with SEC61B, ARL6IP1, ARL6IP2, ARL6IP3, ARL6IP4 ARL6IP5 and ARL6IP6. Interacts (GTP-bound form) with the BBSome a complex that contains BBS1, BBS2, BBS4, BBS5, BBS7, BBS8/TTC8, BBS9 and BBIP10. Interacts (GTP-free form) with IFT27.

Its subcellular location is the cell projection. It localises to the cilium membrane. It is found in the cytoplasm. The protein resides in the cytoskeleton. The protein localises to the cilium axoneme. Its subcellular location is the cilium basal body. Functionally, involved in membrane protein trafficking at the base of the ciliary organelle. Mediates recruitment onto plasma membrane of the BBSome complex which would constitute a coat complex required for sorting of specific membrane proteins to the primary cilia. Together with BBS1, is necessary for correct trafficking of PKD1 to primary cilia. Together with the BBSome complex and LTZL1, controls SMO ciliary trafficking and contributes to the sonic hedgehog (SHH) pathway regulation. May regulate cilia assembly and disassembly and subsequent ciliary signaling events such as the Wnt signaling cascade. Isoform 2 may be required for proper retinal function and organization. The protein is ADP-ribosylation factor-like protein 6 (ARL6) of Homo sapiens (Human).